The chain runs to 2346 residues: Myomegalin (2346 aa).

Coiled-coil stretches lie at residues 41-132, 162-205, 238-318, and 350-684; these read REDI…LVEA, DQYT…LLEE, DSHL…REML, and CSQL…RQYL. A Phosphoserine modification is found at Glu252. The disordered stretch occupies residues 698-732; the sequence is NQQAEVTPTGRLGKQTDQGSMQIPSRDDSTSLTAK. Thr704 carries the phosphothreonine modification. Positions 722–732 are enriched in basic and acidic residues; it reads SRDDSTSLTAK. Coiled-coil stretches lie at residues 743–936, 1002–1043, 1096–1124, 1212–1240, 1346–1385, and 1431–1455; these read GDLD…TLAA, LQEE…SSVS, SSLQ…EQLV, STQH…SEAT, GKSE…LSVT, and GLQA…LPKN. Positions 1193–1214 are disordered; the sequence is DNQSQPRDPGPQSAFSLPGSTQ. Residues 1205 to 1214 show a composition bias toward polar residues; that stretch reads SAFSLPGSTQ. An Olduvai domain is found at 1551–1642; the sequence is KDHKSEKDQA…EEKKASPSHS (92 aa). A compositionally biased stretch (low complexity) spans 1591–1600; that stretch reads SLTPSSSHAL. 2 disordered regions span residues 1591 to 1614 and 1633 to 1690; these read SLTP…SFLS and EEKK…EANQ. The span at 1652-1690 shows a compositional bias: polar residues; that stretch reads AVLSSKPSSTSASQGAKAESNSNPISLPTPQNTPKEANQ. Coiled-coil stretches lie at residues 1736–1760 and 1840–2077; these read VVSL…ASTV and GADL…QQLE. Disordered regions lie at residues 2081-2103 and 2127-2156; these read GKAS…PGNK and VFPS…TSPV. Over residues 2085–2103 the composition is skewed to polar residues; the sequence is LSPSSINQNFPASTDPGNK. Residues 2273-2312 adopt a coiled-coil conformation; that stretch reads ESTERELLELRTKVSKQERLLQSTTEHLKNANQQKESMEQ.

Interacts with PDE4D. Isoform 13 interacts with MAPRE1 and MAPRE3. Isoform 13 forms a pericentrosomal complex with AKAP9, CDK5RAP2 and EB1/MAPRE1; within this complex, may mediate MAPRE1-binding to CDK5RAP2. Interaction of isoform 13 with AKAP9 stabilizes both proteins. Isoform 13 interacts (via N-terminus) with CAMSAP2; this interaction is much stronger in the presence of AKAP9. In complex with AKAP9, Isoform 13 recruits CAMSAP2 to the Golgi apparatus. Isoform 13 interacts with unglycosylated LGALS3BP; this interaction may connect the pericentrosomal complex to the gamma-tubulin ring complex (gamma-TuRC) to promote microtubule assembly and acetylation. Highly expressed in adult and fetal heart, in skeletal muscle and, to a lower extent, in brain and placenta.

It localises to the golgi apparatus. It is found in the cytoplasm. The protein resides in the cytoskeleton. Its subcellular location is the microtubule organizing center. The protein localises to the centrosome. Functionally, functions as an anchor sequestering components of the cAMP-dependent pathway to Golgi and/or centrosomes. Its function is as follows. Participates in microtubule dynamics, promoting microtubule assembly. Depending upon the cell context, may act at the level of the Golgi apparatus or that of the centrosome. In complex with AKAP9, recruits CAMSAP2 to the Golgi apparatus and tethers non-centrosomal minus-end microtubules to the Golgi, an important step for polarized cell movement. In complex with AKAP9, EB1/MAPRE1 and CDK5RAP2, contributes to microtubules nucleation and extension from the centrosome to the cell periphery, a crucial process for directed cell migration, mitotic spindle orientation and cell-cycle progression. The sequence is that of Myomegalin (PDE4DIP) from Homo sapiens (Human).